Reading from the N-terminus, the 59-residue chain is U-actitoxin-Aer2a (59 aa).

In terms of processing, contains 5 disulfide bonds.

It is found in the secreted. Its subcellular location is the nematocyst. The sequence is that of U-actitoxin-Aer2a from Anemonia erythraea (Sea anemone).